Reading from the N-terminus, the 1129-residue chain is Protein TPR1 (1129 aa).

The 33-residue stretch at 4-36 (LSRELVFLILQFLDEEKFKETVHKLEQESGFFF) folds into the LisH domain. In terms of domain architecture, CTLH spans 34–92 (FFFNMKYFEEKVHAGEWDEVEKYLSGFTKVDDNRYSMKIFFEIRKQKYLEALDRHDRAK). WD repeat units lie at residues 337 to 377 (SQGS…RLFS), 398 to 437 (ESSI…ETRQ), 443 to 485 (AHSG…FSFE), 487 to 527 (HEAP…SRVD), 579 to 618 (KKSA…MLSS), 623 to 662 (GGLP…RTLR), 762 to 801 (DQAS…QNPS), 829 to 867 (NPED…VMTT), 870 to 910 (PPPP…VKTR), 913 to 952 (GHQR…KKKS), and 1005 to 1044 (ALSA…LRCR). Positions 1092-1129 (LESEGKWGTTPPTENGVPNGRTSTSSATSNPAADQIQR) are disordered. The span at 1113-1129 (TSTSSATSNPAADQIQR) shows a compositional bias: low complexity.

Tetramer. Interacts with D53. Interacts with WOX1. Interacts with MOF1. In terms of tissue distribution, expressed in panicles, stems, leaves, spikelets and seed endosperm.

Functionally, probable downstream regulator of strigolactones signaling. The protein is Protein TPR1 of Oryza sativa subsp. japonica (Rice).